A 554-amino-acid chain; its full sequence is Methyl-CpG-binding domain protein 4 (554 aa).

The tract at residues 1 to 23 (MESPNLGDNRVRGESLVPDPPWD) is disordered. An MBD domain is found at 63-135 (STTATEGHKP…EDFNFTVLPK (73 aa)). Over residues 154 to 164 (QPNETDVSKQN) the composition is skewed to polar residues. 2 disordered regions span residues 154–195 (QPNE…SNSN) and 209–252 (DVDS…RKRA). The span at 178–195 (LPSGTSESPESSGLSNSN) shows a compositional bias: low complexity. Phosphoserine is present on residues S296 and S402. Residue D534 is part of the active site.

Interacts with MLH1.

It is found in the nucleus. Mismatch-specific DNA N-glycosylase involved in DNA repair. Has thymine glycosylase activity and is specific for G:T mismatches within methylated and unmethylated CpG sites. Can also remove uracil or 5-fluorouracil in G:U mismatches. Has no lyase activity. Was first identified as methyl-CpG-binding protein. The chain is Methyl-CpG-binding domain protein 4 (Mbd4) from Mus musculus (Mouse).